The primary structure comprises 1019 residues: Katanin p80 WD40 repeat-containing subunit B1 homolog KTN80.1 (1019 aa).

7 WD repeats span residues 13–53 (AHSG…SPMS), 56–95 (GHTS…MVRA), 98–137 (GHRS…CIQT), 140–181 (GHTR…HEFK), 183–221 (HEGP…LIGT), 224–264 (PEAT…DGVD), and 266–303 (GWST…LEPY). A DWD box motif is present at residues 114 to 130 (FLASGSSDTNLRVWDTR). 4 disordered regions span residues 388-424 (FGPA…TKSG), 455-474 (KSGL…LSEQ), 517-581 (IHRS…GSRE), and 607-652 (RGEK…RARS). The span at 465 to 474 (QTQNAFLSEQ) shows a compositional bias: polar residues. Positions 553-572 (IPSKTERVLSREKPGDEQKN) are enriched in basic and acidic residues. A compositionally biased stretch (polar residues) spans 614–628 (TEGASTTIEQNNNAV).

It belongs to the WD repeat KATNB1 family. As to quaternary structure, component of KTN80-KTN1 complexes composed of a hexamer of KTN1-KTN80 heterodimers that sense microtubule (MT) geometry to confer precise MT severing. Interacts directly with AAA1/KTN1 and KTN80.3, and weakly with KTN80.4. As to expression, expressed at low levels in siliques, flowers, leaves, stems and roots.

It is found in the cytoplasm. Its subcellular location is the cytoskeleton. Functionally, may participate in a complex which severs microtubules in an ATP-dependent manner. Microtubule severing may promote rapid reorganization of cellular microtubule arrays. Confers precision to microtubule (MT) severing by specific targeting of KTN1 to MT cleavage sites such as crossover or branching nucleation sites. Together with other KTN80s, regulates cell elongation by modulating MT organization. This chain is Katanin p80 WD40 repeat-containing subunit B1 homolog KTN80.1, found in Arabidopsis thaliana (Mouse-ear cress).